The primary structure comprises 268 residues: Enoyl-[acyl-carrier-protein] reductase [NADH] (268 aa).

Residues 20–21, 64–65, and 95–96 each bind NAD(+); these read SI, DV, and IA. Y157 provides a ligand contact to substrate. Positions 164 and 193 each coordinate NAD(+).

It belongs to the short-chain dehydrogenases/reductases (SDR) family. FabI subfamily. Homodimer. Homotetramer.

The enzyme catalyses a 2,3-saturated acyl-[ACP] + NAD(+) = a (2E)-enoyl-[ACP] + NADH + H(+). The catalysed reaction is a 2,3-saturated acyl-CoA + NAD(+) = a (2E)-enoyl-CoA + NADH + H(+). It participates in lipid metabolism; mycolic acid biosynthesis. Its function is as follows. Enoyl-ACP reductase of the type II fatty acid syntase (FAS-II) system, which is involved in the biosynthesis of mycolic acids, a major component of mycobacterial cell walls. Catalyzes the NADH-dependent reduction of the double bond of 2-trans-enoyl-[acyl-carrier protein], an essential step in the fatty acid elongation cycle of the FAS-II pathway. Shows preference for long-chain fatty acyl thioester substrates, and can also use 2-trans-enoyl-CoAs as alternative substrates. The mycobacterial FAS-II system utilizes the products of the FAS-I system as primers to extend fatty acyl chain lengths up to C56, forming the meromycolate chain that serves as the precursor for final mycolic acids. In Mycobacterium avium, this protein is Enoyl-[acyl-carrier-protein] reductase [NADH].